The following is a 155-amino-acid chain: MASEELFEAEFSEEQDLEHQQAMETEEAELAETEEPLEITEESPDNPEAESTTEQLTEKPVTNGNKAPADNEAKMTQLPLARIRNIMKLDPDLHMANNEAVFIVAKAVELFIASLSRESYTYTAQSKKKTIQKRDVDMAISAVDSLLFLDGAMNF.

Composition is skewed to acidic residues over residues 1 to 16 (MASEELFEAEFSEEQD) and 24 to 48 (ETEEAELAETEEPLEITEESPDNPE). The disordered stretch occupies residues 1 to 76 (MASEELFEAE…APADNEAKMT (76 aa)). Positions 49–65 (AESTTEQLTEKPVTNGN) are enriched in polar residues.

As to quaternary structure, component of the DNA polymerase epsilon complex consisting of four subunits: the catalytic subunit PolE1/DNApol-epsilon255 and the accessory subunits PolE2/DNApol-epsilon58, Chrac-14/DNApolE3 and PolE4/Mes4.

It is found in the nucleus. In terms of biological role, accessory component of the DNA polymerase epsilon complex. Participates in DNA repair and in chromosomal DNA replication. Has a role in cell cycle progression. Required for wing morphogenesis. This chain is DNA polymerase epsilon subunit 4, found in Drosophila melanogaster (Fruit fly).